The primary structure comprises 362 residues: Very-long-chain (3R)-3-hydroxyacyl-CoA dehydratase 3 (362 aa).

Methionine 1 carries the N-acetylmethionine modification. Over 1–149 (MENQVLTPHV…ETLTSLKKGY (149 aa)) the chain is Cytoplasmic. In terms of domain architecture, CS spans 5–94 (VLTPHVYWAQ…KESQWWERLT (90 aa)). At threonine 7 the chain carries Phosphothreonine. Positions 111 to 136 (LDESDAEMELRAKEEEQLNKLRLESQ) form a coiled coil. Phosphoserine is present on residues serine 114 and serine 135. The chain crosses the membrane as a helical span at residues 150–170 (LFMYNLVQFLGFSWIFVNMTV). At 171 to 189 (RFFILGKESFYDTFHTVAD) the chain is on the lumenal side. A helical membrane pass occupies residues 190 to 210 (MMYFCQMLAAVESINAAIGVT). Residues 211–212 (KS) are Cytoplasmic-facing. The chain crosses the membrane as a helical span at residues 213–233 (PVVPSLFQLLGRNFILFIIFG). The Lumenal segment spans residues 234–242 (TMEEMQNKA). A helical transmembrane segment spans residues 243–263 (VVFFVFYIWSTVEIFRYPFYM). The Cytoplasmic segment spans residues 264 to 280 (LSCIDMDWKVLTWLRYT). The chain crosses the membrane as a helical span at residues 281–301 (VWIPLYPMGCLAEAVSVIQSI). Active-site residues include tyrosine 286 and glutamate 293. Residues 302 to 325 (PVFNETGRFSFTLPYPVKIKVRFS) are Lumenal-facing. Residues 326–346 (FFLQIYLILLFLGLYVNFRYL) form a helical membrane-spanning segment. The Cytoplasmic portion of the chain corresponds to 347-362 (YKQRRRRFGQKKKKIH).

Belongs to the very long-chain fatty acids dehydratase HACD family. May interact with enzymes of the ELO family (including ELOVL1); with those enzymes that mediate condensation, the first of the four steps of the reaction cycle responsible for fatty acids elongation, may be part of a larger fatty acids elongase complex. Interacts with RAC1. Associates with internalized insulin receptor/INSR complexes on Golgi/endosomal membranes; HACD3/PTPLAD1 together with ATIC and PRKAA2/AMPK2 is proposed to be part of a signaling network regulating INSR autophosphorylation and endocytosis.

It is found in the endoplasmic reticulum membrane. The catalysed reaction is a very-long-chain (3R)-3-hydroxyacyl-CoA = a very-long-chain (2E)-enoyl-CoA + H2O. It catalyses the reaction (3R)-hydroxyhexadecanoyl-CoA = (2E)-hexadecenoyl-CoA + H2O. The protein operates within lipid metabolism; fatty acid biosynthesis. Its function is as follows. Catalyzes the third of the four reactions of the long-chain fatty acids elongation cycle. This endoplasmic reticulum-bound enzymatic process, allows the addition of two carbons to the chain of long- and very long-chain fatty acids/VLCFAs per cycle. This enzyme catalyzes the dehydration of the 3-hydroxyacyl-CoA intermediate into trans-2,3-enoyl-CoA, within each cycle of fatty acid elongation. Thereby, it participates in the production of VLCFAs of different chain lengths that are involved in multiple biological processes as precursors of membrane lipids and lipid mediators. Involved in Rac1-signaling pathways leading to the modulation of gene expression. Promotes insulin receptor/INSR autophosphorylation and is involved in INSR internalization. In Bos taurus (Bovine), this protein is Very-long-chain (3R)-3-hydroxyacyl-CoA dehydratase 3.